The primary structure comprises 197 residues: Large ribosomal subunit protein bL25 (197 aa).

The protein belongs to the bacterial ribosomal protein bL25 family. CTC subfamily. As to quaternary structure, part of the 50S ribosomal subunit; part of the 5S rRNA/L5/L18/L25 subcomplex. Contacts the 5S rRNA. Binds to the 5S rRNA independently of L5 and L18.

In terms of biological role, this is one of the proteins that binds to the 5S RNA in the ribosome where it forms part of the central protuberance. The chain is Large ribosomal subunit protein bL25 from Citrifermentans bemidjiense (strain ATCC BAA-1014 / DSM 16622 / JCM 12645 / Bem) (Geobacter bemidjiensis).